The sequence spans 393 residues: S-adenosylmethionine synthase (393 aa).

Residue Glu9 participates in Mg(2+) binding. His15 contributes to the ATP binding site. Glu43 provides a ligand contact to K(+). L-methionine contacts are provided by Glu56 and Gln99. ATP is bound by residues 167–169 (DGK), 235–238 (SGRF), Asp246, 252–253 (RK), Ala269, Lys273, and Lys277. An L-methionine-binding site is contributed by Asp246. Lys277 serves as a coordination point for L-methionine.

Belongs to the AdoMet synthase family. In terms of assembly, homotetramer. Mn(2+) serves as cofactor. Mg(2+) is required as a cofactor. The cofactor is Co(2+). It depends on K(+) as a cofactor.

It is found in the cytoplasm. It catalyses the reaction L-methionine + ATP + H2O = S-adenosyl-L-methionine + phosphate + diphosphate. Its pathway is amino-acid biosynthesis; S-adenosyl-L-methionine biosynthesis; S-adenosyl-L-methionine from L-methionine: step 1/1. Functionally, catalyzes the formation of S-adenosylmethionine from methionine and ATP. The reaction comprises two steps that are both catalyzed by the same enzyme: formation of S-adenosylmethionine (AdoMet) and triphosphate, and subsequent hydrolysis of the triphosphate. This chain is S-adenosylmethionine synthase (SAM), found in Camellia sinensis (Tea plant).